A 101-amino-acid polypeptide reads, in one-letter code: Citrate lyase acyl carrier protein (101 aa).

At Ser14 the chain carries O-(phosphoribosyl dephospho-coenzyme A)serine.

It belongs to the CitD family. Oligomer with a subunit composition of (alpha,beta,gamma)6.

It is found in the cytoplasm. Covalent carrier of the coenzyme of citrate lyase. The protein is Citrate lyase acyl carrier protein of Latilactobacillus sakei subsp. sakei (strain 23K) (Lactobacillus sakei subsp. sakei).